The primary structure comprises 295 residues: MGESLDRCIDDINRAVDSMSTLYFKPPGIFHNAILQGASNKASIRKDITRLIKDCNHDEAYLLFKVNPEKQSVSRRDGKEGVFDYVIKRDTDMKRNRRLGRPGEKPIIHVPKEVYLNKDRLDLNNKRRRTATTSGGGLNGFIFDTDLIGSSVISNSSSGTFKALSAVFKDDPQIQRLLYALENGSVLMEEESNNQRRKTIFVEDFPTDLILKVMAEVTDLWPLTEFKQDYDQLYHNYEQLSSKLRFIKKEVLLQDDRLKTMSQYHPSSSHDVAKIIRKEKDEIRRLEMEIANLQE.

The residue at position 199 (Thr-199) is a Phosphothreonine; by IPL1. Residues 223–295 (LTEFKQDYDQ…LEMEIANLQE (73 aa)) adopt a coiled-coil conformation.

The protein belongs to the DASH complex SPC34 family. Component of the DASH complex consisting of ASK1, DAD1, DAD2, DAD3, DAD4, DAM1, DUO1, HSK3, SPC19 and SPC34, with a stoichiometry of one copy of each subunit per complex. Multiple DASH complexes oligomerize to form a ring that encircles spindle microtubules and organizes the rod-like NDC80 complexes of the outer kinetochore. DASH complex oligomerization strengthens microtubule attachments. On cytoplasmic microtubules, DASH complexes appear to form patches instead of rings.

The protein localises to the nucleus. It localises to the cytoplasm. The protein resides in the cytoskeleton. It is found in the spindle. Its subcellular location is the chromosome. The protein localises to the centromere. It localises to the kinetochore. Component of the DASH complex that connects microtubules with kinetochores and couples microtubule depolymerisation to chromosome movement; it is involved in retrieving kinetochores to the spindle poles before their re-orientation on the spindle in early mitosis and allows microtubule depolymerization to pull chromosomes apart and resist detachment during anaphase. Kinetochores, consisting of a centromere-associated inner segment and a microtubule-contacting outer segment, play a crucial role in chromosome segregation by mediating the physical connection between centromeric DNA and microtubules. Kinetochores also serve as an input point for the spindle assembly checkpoint, which delays anaphase until all chromosomes have bioriented on the mitotic spindle. During spindle-kinetochore attachment, kinetochores first attach to the lateral surface of spindle microtubules, which supports the congression of chromosomes toward the middle of the dividing cell; they then slide along towards the spindle pole, a process independent of the DASH complex but requiring the NDC80 complex. When the end of a disassembling microtubule reaches the laterally attached kinetochore, the DASH complex together with the NDC80 complex and STU2 convert lateral attachment to end-on capture to produce a structure that can track with microtubule shortening and sustain attachment when tension is applied across sister kinetochores upon their biorientation. Microtubule depolymerization proceeds by protofilament splaying and induces the kinetochore-attached DASH complex to slide longitudinally, thereby helping to transduce depolymerization energy into pulling forces to disjoin chromatids. Incorrect microtubule attachments are corrected by releasing microubules from the kinetochore through phosphorylation by IPL1 of kinetochore components. Links the microtubule cytoskeleton to chromosomes during interphase. Also contributes to the poleward transport of kinetochores on microtubules following centromeric DNA replication in S-phase. This Saccharomyces cerevisiae (strain ATCC 204508 / S288c) (Baker's yeast) protein is DASH complex subunit SPC34 (SPC34).